The sequence spans 136 residues: Protein NrdI (136 aa).

Belongs to the NrdI family.

Probably involved in ribonucleotide reductase function. The protein is Protein NrdI of Salmonella agona (strain SL483).